A 327-amino-acid polypeptide reads, in one-letter code: Dolichyl-phosphate beta-glucosyltransferase (327 aa).

Residues 1 to 15 (MIDLFINIASFTIYG) are Lumenal-facing. The helical transmembrane segment at 16–36 (IPVIPLFIIVFVILSYYLLLL) threads the bilayer. At 37 to 327 (HDESPLWLEK…YLLGIWKIKS (291 aa)) the chain is on the cytoplasmic side.

This sequence belongs to the glycosyltransferase 2 family.

The protein resides in the endoplasmic reticulum membrane. The enzyme catalyses a di-trans,poly-cis-dolichyl phosphate + UDP-alpha-D-glucose = a di-trans,poly-cis-dolichyl beta-D-glucosyl phosphate + UDP. The protein operates within protein modification; protein glycosylation. Its function is as follows. Endoplasmic reticulum membrane-bound UDP-glucose:dolichyl-phosphate glucosyltransferase involved in protein N-linked glycosylation. The sequence is that of Dolichyl-phosphate beta-glucosyltransferase (alg5) from Dictyostelium discoideum (Social amoeba).